A 368-amino-acid polypeptide reads, in one-letter code: Queuine tRNA-ribosyltransferase (368 aa).

The Proton acceptor role is filled by aspartate 89. Residues 89-93 (DSGGF), aspartate 143, and glycine 216 each bind substrate. Residues 247–253 (GVGKPED) form an RNA binding region. Catalysis depends on aspartate 266, which acts as the Nucleophile. The interval 271–275 (TRNAR) is RNA binding; important for wobble base 34 recognition. The Zn(2+) site is built by cysteine 304, cysteine 306, cysteine 309, and histidine 335.

The protein belongs to the queuine tRNA-ribosyltransferase family. Homodimer. Within each dimer, one monomer is responsible for RNA recognition and catalysis, while the other monomer binds to the replacement base PreQ1. Requires Zn(2+) as cofactor.

The catalysed reaction is 7-aminomethyl-7-carbaguanine + guanosine(34) in tRNA = 7-aminomethyl-7-carbaguanosine(34) in tRNA + guanine. It participates in tRNA modification; tRNA-queuosine biosynthesis. Its function is as follows. Catalyzes the base-exchange of a guanine (G) residue with the queuine precursor 7-aminomethyl-7-deazaguanine (PreQ1) at position 34 (anticodon wobble position) in tRNAs with GU(N) anticodons (tRNA-Asp, -Asn, -His and -Tyr). Catalysis occurs through a double-displacement mechanism. The nucleophile active site attacks the C1' of nucleotide 34 to detach the guanine base from the RNA, forming a covalent enzyme-RNA intermediate. The proton acceptor active site deprotonates the incoming PreQ1, allowing a nucleophilic attack on the C1' of the ribose to form the product. After dissociation, two additional enzymatic reactions on the tRNA convert PreQ1 to queuine (Q), resulting in the hypermodified nucleoside queuosine (7-(((4,5-cis-dihydroxy-2-cyclopenten-1-yl)amino)methyl)-7-deazaguanosine). The protein is Queuine tRNA-ribosyltransferase of Buchnera aphidicola subsp. Schizaphis graminum (strain Sg).